We begin with the raw amino-acid sequence, 238 residues long: Ribonuclease 3 (238 aa).

Positions 8–135 (VAELERRIGY…LIAALYIDGG (128 aa)) constitute an RNase III domain. Residue glutamate 48 participates in Mg(2+) binding. Aspartate 52 is an active-site residue. Aspartate 121 and glutamate 124 together coordinate Mg(2+). Residue glutamate 124 is part of the active site. The DRBM domain occupies 161-230 (DPKTQLQEWV…AQCMLLKREG (70 aa)).

It belongs to the ribonuclease III family. As to quaternary structure, homodimer. Mg(2+) serves as cofactor.

The protein localises to the cytoplasm. The enzyme catalyses Endonucleolytic cleavage to 5'-phosphomonoester.. Functionally, digests double-stranded RNA. Involved in the processing of primary rRNA transcript to yield the immediate precursors to the large and small rRNAs (23S and 16S). Processes some mRNAs, and tRNAs when they are encoded in the rRNA operon. Processes pre-crRNA and tracrRNA of type II CRISPR loci if present in the organism. The sequence is that of Ribonuclease 3 from Phenylobacterium zucineum (strain HLK1).